The sequence spans 405 residues: Exodeoxyribonuclease 7 large subunit (405 aa).

Belongs to the XseA family. Heterooligomer composed of large and small subunits.

Its subcellular location is the cytoplasm. The catalysed reaction is Exonucleolytic cleavage in either 5'- to 3'- or 3'- to 5'-direction to yield nucleoside 5'-phosphates.. Functionally, bidirectionally degrades single-stranded DNA into large acid-insoluble oligonucleotides, which are then degraded further into small acid-soluble oligonucleotides. This is Exodeoxyribonuclease 7 large subunit from Halothermothrix orenii (strain H 168 / OCM 544 / DSM 9562).